Reading from the N-terminus, the 113-residue chain is UPF0342 protein SEQ_0993 (113 aa).

It belongs to the UPF0342 family.

This is UPF0342 protein SEQ_0993 from Streptococcus equi subsp. equi (strain 4047).